Consider the following 138-residue polypeptide: 10 kDa chaperonin 1, chloroplastic (138 aa).

The transit peptide at 1–61 (MASSFITVPK…VPQADRVLVR (61 aa)) directs the protein to the chloroplast. Residues 50 to 137 (KVVPQADRVL…CKESDLLAIV (88 aa)) form a cpn-10 domain region.

The protein belongs to the GroES chaperonin family. In terms of tissue distribution, expressed at low levels in germinating seeds, seedlings, rosettes leaves, flowers and siliques.

It localises to the plastid. The protein localises to the chloroplast. Functions as a co-chaperone for protein folding in chloroplasts. The protein is 10 kDa chaperonin 1, chloroplastic of Arabidopsis thaliana (Mouse-ear cress).